The following is a 229-amino-acid chain: ATP-dependent dethiobiotin synthetase BioD (229 aa).

15–20 (EIGKTL) is a binding site for ATP. T19 is a binding site for Mg(2+). K40 is an active-site residue. ATP-binding positions include D57, 118 to 121 (EGVG), and 207 to 209 (PRL). Residues D57 and E118 each coordinate Mg(2+).

The protein belongs to the dethiobiotin synthetase family. In terms of assembly, homodimer. Mg(2+) serves as cofactor.

It localises to the cytoplasm. The catalysed reaction is (7R,8S)-7,8-diammoniononanoate + CO2 + ATP = (4R,5S)-dethiobiotin + ADP + phosphate + 3 H(+). The protein operates within cofactor biosynthesis; biotin biosynthesis; biotin from 7,8-diaminononanoate: step 1/2. Catalyzes a mechanistically unusual reaction, the ATP-dependent insertion of CO2 between the N7 and N8 nitrogen atoms of 7,8-diaminopelargonic acid (DAPA, also called 7,8-diammoniononanoate) to form a ureido ring. This Ralstonia nicotianae (strain ATCC BAA-1114 / GMI1000) (Ralstonia solanacearum) protein is ATP-dependent dethiobiotin synthetase BioD.